A 1132-amino-acid polypeptide reads, in one-letter code: DNA topoisomerase 2 (1132 aa).

ATP-binding positions include N68, N100, 137–139 (SSN), and 150–157 (GKNGLGVK). Residues 327–329 (NKP) form an interaction with DNA region. 363–365 (QNK) contacts ATP. The 136-residue stretch at 442-577 (CTLIVCEGLS…NLKDFPFISS (136 aa)) folds into the Toprim domain. Positions 448, 538, and 540 each coordinate Mg(2+). The 413-residue stretch at 713-1125 (LPHLIDGLKE…NEGQMWLKDI (413 aa)) folds into the Topo IIA-type catalytic domain. Y803 serves as the catalytic O-(5'-phospho-DNA)-tyrosine intermediate. Residues 979-988 (KLRSYIHTSN) are interaction with DNA.

The protein belongs to the type II topoisomerase family. Mg(2+) is required as a cofactor. The cofactor is Mn(2+). Ca(2+) serves as cofactor.

The enzyme catalyses ATP-dependent breakage, passage and rejoining of double-stranded DNA.. Can introduce negative superhelical turns into double-stranded circular DNA. This is DNA topoisomerase 2 (TOP2) from Acheta domesticus (House cricket).